A 158-amino-acid chain; its full sequence is C-type lectin TsL (158 aa).

The signal sequence occupies residues 1–23 (MGRFIFVSFGLLVVFLSLSGAKG). The C-type lectin domain occupies 24–158 (SCCTNDSLPM…KNSFLCQCKF (135 aa)). Cystine bridges form between Cys-26–Cys-37, Cys-54–Cys-154, Cys-61–Cys-156, and Cys-129–Cys-146. A glycan (N-linked (GlcNAc...) (high mannose) asparagine) is linked at Asn-28. Ca(2+) is bound by residues Gln-119, Asp-121, Glu-127, Asn-142, and Asp-143. The Galactose-binding signature appears at 119–121 (QPD).

The protein belongs to the true venom lectin family. Homodimer; disulfide-linked. Expressed by the venom gland.

It localises to the secreted. In terms of biological role, galactose-binding protein which recognizes specific carbohydrate structures and agglutinates a variety of animal cells by binding to cell-surface glycoproteins and glycolipids. May be a calcium-dependent lectin. In Trimeresurus stejnegeri (Chinese green tree viper), this protein is C-type lectin TsL.